A 221-amino-acid chain; its full sequence is Translation initiation factor 6 (221 aa).

The protein belongs to the eIF-6 family.

Functionally, binds to the 50S ribosomal subunit and prevents its association with the 30S ribosomal subunit to form the 70S initiation complex. This chain is Translation initiation factor 6, found in Halorubrum lacusprofundi (strain ATCC 49239 / DSM 5036 / JCM 8891 / ACAM 34).